A 361-amino-acid polypeptide reads, in one-letter code: Velvet complex subunit B (361 aa).

Disordered stretches follow at residues 1-36 (MYAVEDRHHPVPPPLSMDRISAPSVQYPSGTTSLRQ) and 308-340 (NGAPVIEPHQSWPRFSLNPSRSSPPKSSPVLLR). Positions 23-35 (PSVQYPSGTTSLR) are enriched in polar residues. Residues 47–353 (QDGRSWSLQV…SASALRYRVS (307 aa)) form the Velvet domain. A compositionally biased stretch (low complexity) spans 323-336 (SLNPSRSSPPKSSP).

The protein belongs to the velvet family. VelB subfamily. As to quaternary structure, component of the heterotrimeric velvet complex composed of laeA, veA and velB; VeA acting as a bridging protein between laeA and velB. Interacts with velA. Forms a heterodimeric complex with vosA; the formation of the velB-vosA complex is light-dependent. Interacts with vosA.

Its subcellular location is the nucleus. It is found in the cytoplasm. Component of the velvet transcription factor complex that controls sexual/asexual developmental ratio in response to light, promoting sexual development in the darkness while stimulating asexual sporulation under illumination. The velvet complex acts as a global regulator for secondary metabolite gene expression. Component of the velB-VosA heterodimeric complex that plays a dual role in activating genes associated with spore maturation and repressing certain development-associated genes. The velB-VosA complex binds DNA through the DNA-binding domain of vosA that recognizes an 11-nucleotide consensus sequence 5'-CTGGCCGCGGC-3' consisting of two motifs in the promoters of key developmental regulatory genes. Controls conidiophore formation. The sequence is that of Velvet complex subunit B from Penicillium rubens (strain ATCC 28089 / DSM 1075 / NRRL 1951 / Wisconsin 54-1255) (Penicillium chrysogenum).